We begin with the raw amino-acid sequence, 73 residues long: Putative membrane protein insertion efficiency factor (73 aa).

It belongs to the UPF0161 family.

It localises to the cell inner membrane. Its function is as follows. Could be involved in insertion of integral membrane proteins into the membrane. The protein is Putative membrane protein insertion efficiency factor of Neisseria meningitidis serogroup C / serotype 2a (strain ATCC 700532 / DSM 15464 / FAM18).